The following is a 153-amino-acid chain: Endoribonuclease YbeY (153 aa).

Zn(2+) is bound by residues histidine 116, histidine 120, and histidine 126.

It belongs to the endoribonuclease YbeY family. Zn(2+) is required as a cofactor.

The protein localises to the cytoplasm. Single strand-specific metallo-endoribonuclease involved in late-stage 70S ribosome quality control and in maturation of the 3' terminus of the 16S rRNA. The sequence is that of Endoribonuclease YbeY from Leifsonia xyli subsp. xyli (strain CTCB07).